Consider the following 133-residue polypeptide: Putative pre-16S rRNA nuclease (133 aa).

The protein belongs to the YqgF nuclease family.

It localises to the cytoplasm. Functionally, could be a nuclease involved in processing of the 5'-end of pre-16S rRNA. The polypeptide is Putative pre-16S rRNA nuclease (Bordetella bronchiseptica (strain ATCC BAA-588 / NCTC 13252 / RB50) (Alcaligenes bronchisepticus)).